Consider the following 465-residue polypeptide: MQLDKKIINHVHCLGIGGIGVSALAEILLKKGCRVTGSDVSPNKNTERLQRLGAEIIFNHDGTAITQADCAVYSSAIGATNPELMAAKQAKIPLLKRGEMLANLMKEYQSIAVAGAHGKTTTSGMLSHAFVEANLDPTFMVGGVLNNSQTPARVGNGHYFIAEADESDASFLFMHPDIAVVTNIDADHLSTYDGDFNRLKQTYIQFLEQTAQDGVVVLCLDDPILREIAPLLSRRVITYGFSSDAQYRVVDYCQQGIQSLFQIHSPQRKAPLTVKLSMPGQHNALNATAVTAIADVVQMNEPALLKSLADFPGVDRRFTIRGEMILPKGNALIIEDYGHHPNEIKATLAAARAAWPERRMVLVFQPHRYSRTRDLMTEFVSVLAETDWLVLLEVYSAGEMPIPGADGMALIKMMSNGMAQKTTFVPLLQNLPETLQKLSQPNDIIILQGAGNIGSIVTALVQTYG.

Gly115–Thr121 serves as a coordination point for ATP.

The protein belongs to the MurCDEF family.

Its subcellular location is the cytoplasm. The enzyme catalyses UDP-N-acetyl-alpha-D-muramate + L-alanine + ATP = UDP-N-acetyl-alpha-D-muramoyl-L-alanine + ADP + phosphate + H(+). It participates in cell wall biogenesis; peptidoglycan biosynthesis. Functionally, cell wall formation. This Coxiella burnetii (strain CbuG_Q212) (Coxiella burnetii (strain Q212)) protein is UDP-N-acetylmuramate--L-alanine ligase.